A 291-amino-acid polypeptide reads, in one-letter code: Phosphatidylglycerol--prolipoprotein diacylglyceryl transferase (291 aa).

Transmembrane regions (helical) follow at residues 24–44 (WYALAYIGGIMLGWLYARALL), 64–84 (FILWVTIAIIVGGRVGYVLFY), 100–120 (WNGGMSFHGGFMGCVAAVILF), and 125–145 (GLPILSLGDVATAVGPIGLFL). An a 1,2-diacyl-sn-glycero-3-phospho-(1'-sn-glycerol)-binding site is contributed by Arg147. The next 3 helical transmembrane spans lie at 187–207 (AALEGILLFTILALMIRLGAL), 211–231 (GLVLGSFIALYAMARIVAEFF), and 247–267 (MGMLLSIPMVIIGLAIVYAAW).

Belongs to the Lgt family.

The protein resides in the cell inner membrane. The enzyme catalyses L-cysteinyl-[prolipoprotein] + a 1,2-diacyl-sn-glycero-3-phospho-(1'-sn-glycerol) = an S-1,2-diacyl-sn-glyceryl-L-cysteinyl-[prolipoprotein] + sn-glycerol 1-phosphate + H(+). Its pathway is protein modification; lipoprotein biosynthesis (diacylglyceryl transfer). Its function is as follows. Catalyzes the transfer of the diacylglyceryl group from phosphatidylglycerol to the sulfhydryl group of the N-terminal cysteine of a prolipoprotein, the first step in the formation of mature lipoproteins. The protein is Phosphatidylglycerol--prolipoprotein diacylglyceryl transferase of Nitrobacter winogradskyi (strain ATCC 25391 / DSM 10237 / CIP 104748 / NCIMB 11846 / Nb-255).